Here is a 206-residue protein sequence, read N- to C-terminus: Large ribosomal subunit protein uL4 (206 aa).

This sequence belongs to the universal ribosomal protein uL4 family. As to quaternary structure, part of the 50S ribosomal subunit.

In terms of biological role, one of the primary rRNA binding proteins, this protein initially binds near the 5'-end of the 23S rRNA. It is important during the early stages of 50S assembly. It makes multiple contacts with different domains of the 23S rRNA in the assembled 50S subunit and ribosome. Forms part of the polypeptide exit tunnel. This is Large ribosomal subunit protein uL4 from Nitrobacter hamburgensis (strain DSM 10229 / NCIMB 13809 / X14).